The chain runs to 382 residues: MEKEQLPELKYINVNDFNINEKVIGIPVQTNEVAKYMKMFKGLCYNRIKTKCVIPYNSERMILLETPLKEQTQKLIQDNHLKTVETEVPLTIKNFNVNEIMKRYINKNIQLPSSFETVGTLAHMNLKEEQMEFKYIIGEAFLIKNYPRIQTVITKTAEISNEFRTFPLEVIAGIPNTEVTVICHGVKFVLDYAQCYWNTRLETEHIRIINQMKAGEILCDAFAGVGPFAIPAALKGVKVYANDLNPTAVKYMRINAVNNKTTIECDNMDARDYLRKIVLEKHIQPNYILMNLPATAIEFLDCIPELYLQHCMIHCYGFSPLPNAEDLKKKAFELLKGEYPITIREVRDVAPKKVMYCLSIFIESTKHLTSGNNVPEAKKTLN.

Residues H205, 243–244 (DL), 269–270 (DA), and N291 each bind S-adenosyl-L-methionine.

The protein belongs to the class I-like SAM-binding methyltransferase superfamily. TRM5/TYW2 family. In terms of assembly, monomer.

The protein localises to the mitochondrion matrix. Its subcellular location is the nucleus. The protein resides in the cytoplasm. The enzyme catalyses guanosine(37) in tRNA + S-adenosyl-L-methionine = N(1)-methylguanosine(37) in tRNA + S-adenosyl-L-homocysteine + H(+). In terms of biological role, specifically methylates the N1 position of guanosine-37 in various cytoplasmic and mitochondrial tRNAs. Methylation is not dependent on the nature of the nucleoside 5' of the target nucleoside. This is the first step in the biosynthesis of wybutosine (yW), a modified base adjacent to the anticodon of tRNAs and required for accurate decoding. The sequence is that of tRNA (guanine(37)-N(1))-methyltransferase from Entamoeba histolytica (strain ATCC 30459 / HM-1:IMSS / ABRM).